A 238-amino-acid chain; its full sequence is Purine nucleoside phosphorylase DeoD-type (238 aa).

His4 contributes to the a purine D-ribonucleoside binding site. Phosphate contacts are provided by residues Gly20, Arg24, Arg43, and 87–90 (RVGS). Residues 179-181 (EME) and 203-204 (SD) contribute to the a purine D-ribonucleoside site. Asp204 acts as the Proton donor in catalysis.

It belongs to the PNP/UDP phosphorylase family. Homohexamer; trimer of homodimers.

It carries out the reaction a purine D-ribonucleoside + phosphate = a purine nucleobase + alpha-D-ribose 1-phosphate. It catalyses the reaction a purine 2'-deoxy-D-ribonucleoside + phosphate = a purine nucleobase + 2-deoxy-alpha-D-ribose 1-phosphate. Its function is as follows. Catalyzes the reversible phosphorolytic breakdown of the N-glycosidic bond in the beta-(deoxy)ribonucleoside molecules, with the formation of the corresponding free purine bases and pentose-1-phosphate. The sequence is that of Purine nucleoside phosphorylase DeoD-type from Haemophilus influenzae (strain PittEE).